Here is a 223-residue protein sequence, read N- to C-terminus: Ribosomal RNA small subunit methyltransferase G (223 aa).

S-adenosyl-L-methionine-binding positions include G82, L87, 133–134, and R151; that span reads AE.

It belongs to the methyltransferase superfamily. RNA methyltransferase RsmG family.

Its subcellular location is the cytoplasm. Functionally, specifically methylates the N7 position of guanine in position 518 of 16S rRNA. The protein is Ribosomal RNA small subunit methyltransferase G of Corynebacterium glutamicum (strain ATCC 13032 / DSM 20300 / JCM 1318 / BCRC 11384 / CCUG 27702 / LMG 3730 / NBRC 12168 / NCIMB 10025 / NRRL B-2784 / 534).